We begin with the raw amino-acid sequence, 687 residues long: Methionine--tRNA ligase (687 aa).

The 'HIGH' region signature appears at 14–24; it reads PYANGYIHLGH. Positions 145, 148, 158, and 161 each coordinate Zn(2+). The 'KMSKS' region signature appears at 329–333; sequence KMSKS. Lys332 provides a ligand contact to ATP. The region spanning 585-687 is the tRNA-binding domain; sequence DFDKVDLRIG…DGAQVGQRVK (103 aa).

This sequence belongs to the class-I aminoacyl-tRNA synthetase family. MetG type 1 subfamily. As to quaternary structure, homodimer. Zn(2+) is required as a cofactor.

Its subcellular location is the cytoplasm. The enzyme catalyses tRNA(Met) + L-methionine + ATP = L-methionyl-tRNA(Met) + AMP + diphosphate. Functionally, is required not only for elongation of protein synthesis but also for the initiation of all mRNA translation through initiator tRNA(fMet) aminoacylation. The sequence is that of Methionine--tRNA ligase from Bdellovibrio bacteriovorus (strain ATCC 15356 / DSM 50701 / NCIMB 9529 / HD100).